A 137-amino-acid polypeptide reads, in one-letter code: Bombinin-like peptides 1 (137 aa).

A signal peptide spans 1–18 (MNFKYIVAVSILIASAYA). An Asparagine amide modification is found at Asn70. The segment at 91–112 (LDSFEHPEEASEKETRGFNQEE) is disordered. A D-allo-isoleucine modification is found at Ile118. Ile136 carries the isoleucine amide modification.

The protein belongs to the bombinin family. As to expression, expressed by the skin glands.

The protein resides in the secreted. In terms of biological role, has antimicrobial activity, but no hemolytic activity. Preliminary evidence indicates that this peptide does not lyse and thus kill the bacteria by its antimicrobial activity. Functionally, bombinin H has antibacterial and hemolytic activity. In Bombina variegata (Yellow-bellied toad), this protein is Bombinin-like peptides 1.